The following is a 182-amino-acid chain: Lipid A acyltransferase PagP (182 aa).

Positions 1-21 (MTQYFRSLAFFLLPVPATAMA) are cleaved as a signal peptide. A lipid anchor (N-palmitoyl cysteine) is attached at Cys-22. Cys-22 carries the S-diacylglycerol cysteine lipid modification. Active-site residues include His-55, Asp-98, and Ser-99.

This sequence belongs to the lipid A palmitoyltransferase family. In terms of assembly, homodimer.

The protein resides in the cell outer membrane. The catalysed reaction is a lipid A + a 1,2-diacyl-sn-glycero-3-phosphocholine = a hepta-acyl lipid A + a 2-acyl-sn-glycero-3-phosphocholine. It catalyses the reaction a lipid IVA + a 1,2-diacyl-sn-glycero-3-phosphocholine = a lipid IVB + a 2-acyl-sn-glycero-3-phosphocholine. The enzyme catalyses a lipid IIA + a 1,2-diacyl-sn-glycero-3-phosphocholine = a lipid IIB + a 2-acyl-sn-glycero-3-phosphocholine. Functionally, transfers a fatty acid residue from the sn-1 position of a phospholipid to the N-linked hydroxyfatty acid chain on the proximal unit of lipid A or its precursors. In Bordetella pertussis (strain CS), this protein is Lipid A acyltransferase PagP.